A 185-amino-acid chain; its full sequence is Ribosome-recycling factor (185 aa).

The protein belongs to the RRF family.

It is found in the cytoplasm. In terms of biological role, responsible for the release of ribosomes from messenger RNA at the termination of protein biosynthesis. May increase the efficiency of translation by recycling ribosomes from one round of translation to another. This is Ribosome-recycling factor from Mycobacteroides abscessus (strain ATCC 19977 / DSM 44196 / CCUG 20993 / CIP 104536 / JCM 13569 / NCTC 13031 / TMC 1543 / L948) (Mycobacterium abscessus).